Here is a 289-residue protein sequence, read N- to C-terminus: Delta-sarcoglycan (289 aa).

Over methionine 1–phenylalanine 37 the chain is Cytoplasmic. The chain crosses the membrane as a helical; Signal-anchor for type II membrane protein span at residues valine 38–leucine 56. Topologically, residues lysine 57–leucine 289 are extracellular. Asparagine 60 and asparagine 108 each carry an N-linked (GlcNAc...) asparagine glycan. 2 cysteine pairs are disulfide-bonded: cysteine 263–cysteine 288 and cysteine 265–cysteine 281. A glycan (N-linked (GlcNAc...) asparagine) is linked at asparagine 284.

It belongs to the sarcoglycan beta/delta/gamma/zeta family. As to quaternary structure, interacts with FLNC. Cross-link to form 2 major subcomplexes: one consisting of SGCB, SGCD and SGCG and the other consisting of SGCB and SGCD. The association between SGCB and SGCG is particularly strong while SGCA is loosely associated with the other sarcoglycans. Interacts with DAG1. Post-translationally, disulfide bonds are present. As to expression, most strongly expressed in skeletal and heart muscle. Also detected in proliferating myoblasts.

It localises to the cell membrane. The protein localises to the sarcolemma. The protein resides in the cytoplasm. It is found in the cytoskeleton. Component of the sarcoglycan complex, a subcomplex of the dystrophin-glycoprotein complex which forms a link between the F-actin cytoskeleton and the extracellular matrix. The sequence is that of Delta-sarcoglycan (Sgcd) from Mus musculus (Mouse).